Here is a 922-residue protein sequence, read N- to C-terminus: GPI inositol-deacylase (922 aa).

Residues 1–11 (MFLHSVNLWNL) are Cytoplasmic-facing. The helical transmembrane segment at 12–32 (AFYVFMVFLATLGLWDVFFGF) threads the bilayer. Residues 33–597 (EENKCSMSYM…GQVVRFHGGA (565 aa)) are Lumenal-facing. Residue Ser-174 is part of the active site. Asn-363, Asn-402, and Asn-558 each carry an N-linked (GlcNAc...) asparagine glycan. A helical transmembrane segment spans residues 598–618 (LPAYVVSSILLAYGGQLYSLL). The Cytoplasmic segment spans residues 619–641 (STGYCLEYSTILDKEAKPYKVDP). Residues 642–662 (FVIMIKFLLGYKWFKELWDAV) traverse the membrane as a helical segment. The Lumenal portion of the chain corresponds to 663–668 (LLPELD). A helical membrane pass occupies residues 669–689 (AIVLTSQSMCFPLVSLILFLF). The Cytoplasmic portion of the chain corresponds to 690-694 (GTCTA). The helical transmembrane segment at 695–715 (YWSGLLSSTSVQLLSSLWLAL) threads the bilayer. Residues 716–733 (KRPAELPKDIKVMSPDLP) are Lumenal-facing. A helical membrane pass occupies residues 734–754 (VLTVVFLIVSWTTCGALAILL). The Cytoplasmic segment spans residues 755 to 817 (SYLYYVFKVV…DAEDSLRMHS (63 aa)). A disordered region spans residues 776–798 (NQPVNPKHSRRSEKKSNHHKDSA). A compositionally biased stretch (basic residues) spans 782 to 793 (KHSRRSEKKSNH). Residues 818–838 (TVINLLTWVVLLSMPSLIYWL) traverse the membrane as a helical segment. The Lumenal segment spans residues 839-894 (KNLRYYFKLSPDPCKPLAFLLIPAIAILGNTHTVSVKSSKLLKTVSQFPLPLAVGV). The chain crosses the membrane as a helical span at residues 895-915 (IAFGSSHLYRVPCFVIIPLVF). The Cytoplasmic segment spans residues 916-922 (HALCNFM).

This sequence belongs to the GPI inositol-deacylase family.

Its subcellular location is the endoplasmic reticulum membrane. Its function is as follows. GPI inositol-deacylase that catalyzes the remove of the acyl chain linked to the 2-OH position of inositol ring from the GPI-anchored protein (GPI-AP) in the endoplasmic reticulum. Initiates the post-attachment remodeling phase of GPI-AP biogenesis and participates in endoplasmic reticulum (ER)-to-Golgi transport of GPI-anchored protein. The chain is GPI inositol-deacylase from Mus musculus (Mouse).